Here is an 800-residue protein sequence, read N- to C-terminus: Protein MEI2-like 5 (800 aa).

RRM domains follow at residues 168-241 and 253-326; these read RTLF…FSIP and GTLV…PSRP. A phosphoserine mark is found at Ser384 and Ser390. Disordered regions lie at residues 470–489 and 776–800; these read GSPN…TSST and VVDE…RERS. The span at 471–488 shows a compositional bias: low complexity; it reads SPNARSEPSSSSVWSTSS. A phosphoserine mark is found at Ser789 and Ser792.

Its function is as follows. Probable RNA-binding protein that plays a role in meiosis and vegetative growth. The protein is Protein MEI2-like 5 (ML5) of Arabidopsis thaliana (Mouse-ear cress).